The chain runs to 407 residues: Pyridinium-3,5-bisthiocarboxylic acid mononucleotide nickel insertion protein (407 aa).

Belongs to the LarC family.

It carries out the reaction Ni(II)-pyridinium-3,5-bisthiocarboxylate mononucleotide = pyridinium-3,5-bisthiocarboxylate mononucleotide + Ni(2+). Functionally, involved in the biosynthesis of a nickel-pincer cofactor ((SCS)Ni(II) pincer complex). Binds Ni(2+), and functions in nickel delivery to pyridinium-3,5-bisthiocarboxylic acid mononucleotide (P2TMN), to form the mature cofactor. Is thus probably required for the activation of nickel-pincer cofactor-dependent enzymes. The chain is Pyridinium-3,5-bisthiocarboxylic acid mononucleotide nickel insertion protein from Acetivibrio thermocellus (strain ATCC 27405 / DSM 1237 / JCM 9322 / NBRC 103400 / NCIMB 10682 / NRRL B-4536 / VPI 7372) (Clostridium thermocellum).